Reading from the N-terminus, the 267-residue chain is 14-3-3-like protein GF14 phi (267 aa).

Ala2 is modified (N-acetylalanine). Residues Ser73 and Ser196 each carry the phosphoserine modification. The residue at position 217 (Thr217) is a Phosphothreonine. The tract at residues 244–267 (MQDESPEEIKEAAAPKPAEEQKEI) is disordered. A Phosphoserine modification is found at Ser248. Residues 250-267 (EEIKEAAAPKPAEEQKEI) show a composition bias toward basic and acidic residues.

This sequence belongs to the 14-3-3 family. As to quaternary structure, interacts with FD. Interacts with CINV1.

It is found in the nucleus. It localises to the cytoplasm. Its function is as follows. Is associated with a DNA binding complex that binds to the G box, a well-characterized cis-acting DNA regulatory element found in plant genes. The protein is 14-3-3-like protein GF14 phi (GRF4) of Arabidopsis thaliana (Mouse-ear cress).